A 171-amino-acid chain; its full sequence is Adenine phosphoribosyltransferase (171 aa).

The protein belongs to the purine/pyrimidine phosphoribosyltransferase family. As to quaternary structure, homodimer.

It localises to the cytoplasm. It carries out the reaction AMP + diphosphate = 5-phospho-alpha-D-ribose 1-diphosphate + adenine. Its pathway is purine metabolism; AMP biosynthesis via salvage pathway; AMP from adenine: step 1/1. Catalyzes a salvage reaction resulting in the formation of AMP, that is energically less costly than de novo synthesis. The sequence is that of Adenine phosphoribosyltransferase from Acidiphilium cryptum (strain JF-5).